The sequence spans 203 residues: Recombination protein RecR (203 aa).

A C4-type zinc finger spans residues 56–71 (CEVCGNVSDADRCRIC). The region spanning 79 to 179 (SLVCVVEEPK…TVTRIASGLP (101 aa)) is the Toprim domain.

Belongs to the RecR family.

Functionally, may play a role in DNA repair. It seems to be involved in an RecBC-independent recombinational process of DNA repair. It may act with RecF and RecO. This chain is Recombination protein RecR, found in Mycobacterium sp. (strain JLS).